Here is a 570-residue protein sequence, read N- to C-terminus: 5-aminolevulinate synthase, mitochondrial (570 aa).

A mitochondrion-targeting transit peptide spans methionine 1–tyrosine 53. Residues arginine 119, serine 232, and lysine 251 each contribute to the substrate site. Pyridoxal 5'-phosphate-binding residues include serine 284, histidine 312, and threonine 356. The active site involves lysine 359. Lysine 359 carries the N6-(pyridoxal phosphate)lysine modification. Pyridoxal 5'-phosphate is bound by residues threonine 388 and threonine 389. A substrate-binding site is contributed by threonine 474.

This sequence belongs to the class-II pyridoxal-phosphate-dependent aminotransferase family. As to quaternary structure, homodimer. Pyridoxal 5'-phosphate is required as a cofactor.

The protein resides in the mitochondrion matrix. It catalyses the reaction succinyl-CoA + glycine + H(+) = 5-aminolevulinate + CO2 + CoA. The protein operates within porphyrin-containing compound metabolism; protoporphyrin-IX biosynthesis; 5-aminolevulinate from glycine: step 1/1. Catalyzes the synthesis of 5-aminolevulinate (ALA) from succinyl-CoA and glycine, the first and rate-limiting step in heme biosynthesis. This Kluyveromyces lactis (strain ATCC 8585 / CBS 2359 / DSM 70799 / NBRC 1267 / NRRL Y-1140 / WM37) (Yeast) protein is 5-aminolevulinate synthase, mitochondrial (HEM1).